The chain runs to 114 residues: Large ribosomal subunit protein uL22 (114 aa).

This sequence belongs to the universal ribosomal protein uL22 family. In terms of assembly, part of the 50S ribosomal subunit.

This protein binds specifically to 23S rRNA; its binding is stimulated by other ribosomal proteins, e.g. L4, L17, and L20. It is important during the early stages of 50S assembly. It makes multiple contacts with different domains of the 23S rRNA in the assembled 50S subunit and ribosome. Its function is as follows. The globular domain of the protein is located near the polypeptide exit tunnel on the outside of the subunit, while an extended beta-hairpin is found that lines the wall of the exit tunnel in the center of the 70S ribosome. This is Large ribosomal subunit protein uL22 from Methylacidiphilum infernorum (isolate V4) (Methylokorus infernorum (strain V4)).